We begin with the raw amino-acid sequence, 267 residues long: Tryptophan synthase alpha chain (267 aa).

Active-site proton acceptor residues include E49 and D60.

The protein belongs to the TrpA family. Tetramer of two alpha and two beta chains.

The enzyme catalyses (1S,2R)-1-C-(indol-3-yl)glycerol 3-phosphate + L-serine = D-glyceraldehyde 3-phosphate + L-tryptophan + H2O. It participates in amino-acid biosynthesis; L-tryptophan biosynthesis; L-tryptophan from chorismate: step 5/5. Functionally, the alpha subunit is responsible for the aldol cleavage of indoleglycerol phosphate to indole and glyceraldehyde 3-phosphate. This Pelobacter propionicus (strain DSM 2379 / NBRC 103807 / OttBd1) protein is Tryptophan synthase alpha chain.